The primary structure comprises 701 residues: Arachidonate 12-lipoxygenase, 12R-type (701 aa).

One can recognise a PLAT domain in the interval 2–119; that stretch reads ATYKVKVATG…TLSLREATGK (118 aa). Positions 120–701 constitute a Lipoxygenase domain; sequence TTADDTLPIL…PVLIENSISI (582 aa). Positions 398, 403, 578, 582, and 701 each coordinate Fe cation.

This sequence belongs to the lipoxygenase family. It depends on Fe cation as a cofactor.

The protein resides in the cytoplasm. Its subcellular location is the perinuclear region. The catalysed reaction is (5Z,8Z,11Z,14Z)-eicosatetraenoate + O2 = (12R)-hydroperoxy-(5Z,8Z,10E,14Z)-eicosatetraenoate. The enzyme catalyses N-[omega-(9Z,12Z)-octadecadienoyloxy]acyl-beta-D-glucosyl-(1&lt;-&gt;1)-octadecasphing-4E-enine + O2 = N-[omega-(9R)-hydroperoxy-(10E,12Z)-octadecadienoyloxy]acyl-beta-D-glucosyl-(1&lt;-&gt;1)-octadecasphing-4E-enine. It catalyses the reaction a N-[omega-(9Z,12Z)-octadecadienoyloxy]-acylsphin-4E-enine + O2 = a N-[omega-(9R)-hydroperoxy-(10E,12Z)-octadecadienoyloxy]-acylsphin-4E-enine. It carries out the reaction (6Z,9Z,12Z)-octadecatrienoate + O2 = 10-hydroperoxy-(6Z,8E,12Z)-octadecatrienoate. The catalysed reaction is (4Z,7Z,10Z,13Z,16Z,19Z)-docosahexaenoate + O2 = 14-hydroperoxy-(4Z,7Z,10Z,12E,16Z,19Z)-docosahexaenoate. The enzyme catalyses (8Z,11Z,14Z)-eicosatrienoate + O2 = (8Z,10E,14Z)-12-hydroperoxyeicosatrienoate. It catalyses the reaction (5Z,8Z,11Z,14Z,17Z)-eicosapentaenoate + O2 = (5Z,7Z,8Z,10E,14Z,17Z)-12-hydroperoxyeicosapentaenoate. It carries out the reaction (6Z,9Z,12Z)-octadecatrienoate + O2 = 10R-hydroperoxy-(6Z,8E,12Z)-octadecatrienoate. The catalysed reaction is 1-O-methyl-(5Z,8Z,11Z,14Z)-eicosatetraenoate + O2 = 1-O-methyl (5Z,8Z,10E,12R,14Z)-hydroperoxyiecosatetraenoate. The enzyme catalyses 1-O-methyl-(5Z,8Z,11Z,14Z)-eicosatetraenoate + O2 = 1-O-methyl-8-hydroperoxy-(5Z,9E,11Z,14Z)-eicosatetraenoate. It catalyses the reaction 1-O-methyl-(5Z,8Z,11Z,14Z)-eicosatetraenoate + O2 = 1-O-methyl-(8R)-hydroperoxy-(5Z,9E,11Z,14Z)-eicosatrienoate. It carries out the reaction 1-O-methyl-(9Z,12Z)-octadecadienoate + O2 = 1-O-methyl-(9R)-hydroperoxy-(10E,12Z)-octadecadienoate. The catalysed reaction is 1-O-methyl-20-hydroxy-(5Z,8Z,11Z,14Z)-eicosatetraenoate + O2 = 1-O-methyl-8-hydroperoxy-20-hydroxy-(5Z,9E,11Z,14Z)-eicosatetraenoate. The enzyme catalyses 1-O-methyl-20-hydroxy-(5Z,8Z,11Z,14Z)-eicosatetraenoate + O2 = 1-O-methyl-12-hydroperoxy-20-hydroxy-(5Z,8Z,10E,14Z)-eicosatetraenoate. It catalyses the reaction 1-O-methyl-20-hydroxy-(5Z,8Z,11Z,14Z)-eicosatetraenoate + O2 = 1-O-methyl-9-hydroperoxy-20-hydroxy-(5Z,7E,11Z,14Z)-eicosatetraenoate. It carries out the reaction 1-O-methyl-(9Z,12Z)-octadecadienoate + O2 = 1-O-methyl-(13S)-hydroperoxy-(9Z,11E)-octadecadienoate. It participates in lipid metabolism; hydroperoxy eicosatetraenoic acid biosynthesis. Its pathway is lipid metabolism; sphingolipid metabolism. Increased by calcium. Its function is as follows. Catalyzes the regio and stereo-specific incorporation of a single molecule of dioxygen into free and esterified polyunsaturated fatty acids generating lipid hydroperoxides that can be further reduced to the corresponding hydroxy species. In the skin, acts upstream of ALOXE3 on the lineolate moiety of esterified omega-hydroxyacyl-sphingosine (EOS) ceramides to produce an epoxy-ketone derivative, a crucial step in the conjugation of omega-hydroxyceramide to membrane proteins. Therefore plays a crucial role in the synthesis of corneocytes lipid envelope and the establishment of the skin barrier to water loss. May also play a role in the regulation of the expression of airway mucins. In Rattus norvegicus (Rat), this protein is Arachidonate 12-lipoxygenase, 12R-type.